A 387-amino-acid polypeptide reads, in one-letter code: Mannitol-1-phosphate 5-dehydrogenase (387 aa).

3–14 (ALHFGAGNIGRG) lines the NAD(+) pocket.

This sequence belongs to the mannitol dehydrogenase family.

It catalyses the reaction D-mannitol 1-phosphate + NAD(+) = beta-D-fructose 6-phosphate + NADH + H(+). The chain is Mannitol-1-phosphate 5-dehydrogenase from Yersinia pseudotuberculosis serotype IB (strain PB1/+).